The following is a 121-amino-acid chain: Small ribosomal subunit protein uS13 (121 aa).

The interval 92–121 is disordered; that stretch reads RRGLPVRGQNSKNNARTRKGPKRTVANKKK. The span at 106–121 shows a compositional bias: basic residues; that stretch reads ARTRKGPKRTVANKKK.

It belongs to the universal ribosomal protein uS13 family. Part of the 30S ribosomal subunit. Forms a loose heterodimer with protein S19. Forms two bridges to the 50S subunit in the 70S ribosome.

Functionally, located at the top of the head of the 30S subunit, it contacts several helices of the 16S rRNA. In the 70S ribosome it contacts the 23S rRNA (bridge B1a) and protein L5 of the 50S subunit (bridge B1b), connecting the 2 subunits; these bridges are implicated in subunit movement. Contacts the tRNAs in the A and P-sites. This is Small ribosomal subunit protein uS13 from Shouchella clausii (strain KSM-K16) (Alkalihalobacillus clausii).